Reading from the N-terminus, the 32-residue chain is Calcitonin (32 aa).

The cysteines at positions 1 and 7 are disulfide-linked. Position 32 is a proline amide (proline 32).

The protein belongs to the calcitonin family.

Its subcellular location is the secreted. Functionally, calcitonin is a peptide hormone that causes a rapid but short-lived drop in the level of calcium and phosphate in blood by promoting the incorporation of those ions in the bones. Calcitonin function is mediated by the calcitonin receptor/CALCR and the CALCR-RAMP2 (AMYR2) receptor complex. The chain is Calcitonin (CALCA) from Bos taurus (Bovine).